We begin with the raw amino-acid sequence, 410 residues long: Elongation factor Tu (410 aa).

The tr-type G domain occupies 10-214 (KPHVNIGTIG…EVDAYIPTPE (205 aa)). The G1 stretch occupies residues 19 to 26 (GHVDHGKT). 19-26 (GHVDHGKT) contacts GTP. Thr26 provides a ligand contact to Mg(2+). The segment at 60–64 (GITIN) is G2. The segment at 81-84 (DCPG) is G3. GTP-binding positions include 81-85 (DCPGH) and 136-139 (NKED). The segment at 136–139 (NKED) is G4. The tract at residues 174–176 (SAL) is G5.

The protein belongs to the TRAFAC class translation factor GTPase superfamily. Classic translation factor GTPase family. EF-Tu/EF-1A subfamily. As to quaternary structure, monomer.

The protein resides in the cytoplasm. The catalysed reaction is GTP + H2O = GDP + phosphate + H(+). GTP hydrolase that promotes the GTP-dependent binding of aminoacyl-tRNA to the A-site of ribosomes during protein biosynthesis. In Gloeothece citriformis (strain PCC 7424) (Cyanothece sp. (strain PCC 7424)), this protein is Elongation factor Tu.